Reading from the N-terminus, the 316-residue chain is 4-hydroxy-3-methylbut-2-enyl diphosphate reductase (316 aa).

Residue Cys12 coordinates [4Fe-4S] cluster. (2E)-4-hydroxy-3-methylbut-2-enyl diphosphate is bound by residues His43 and His81. Residues His43 and His81 each contribute to the dimethylallyl diphosphate site. Positions 43 and 81 each coordinate isopentenyl diphosphate. [4Fe-4S] cluster is bound at residue Cys103. Residue His131 coordinates (2E)-4-hydroxy-3-methylbut-2-enyl diphosphate. His131 lines the dimethylallyl diphosphate pocket. His131 contacts isopentenyl diphosphate. Residue Glu133 is the Proton donor of the active site. A (2E)-4-hydroxy-3-methylbut-2-enyl diphosphate-binding site is contributed by Thr170. Cys198 contributes to the [4Fe-4S] cluster binding site. 3 residues coordinate (2E)-4-hydroxy-3-methylbut-2-enyl diphosphate: Ser226, Asn228, and Ser271. Dimethylallyl diphosphate contacts are provided by Ser226, Asn228, and Ser271. Ser226, Asn228, and Ser271 together coordinate isopentenyl diphosphate.

Belongs to the IspH family. It depends on [4Fe-4S] cluster as a cofactor.

It catalyses the reaction isopentenyl diphosphate + 2 oxidized [2Fe-2S]-[ferredoxin] + H2O = (2E)-4-hydroxy-3-methylbut-2-enyl diphosphate + 2 reduced [2Fe-2S]-[ferredoxin] + 2 H(+). It carries out the reaction dimethylallyl diphosphate + 2 oxidized [2Fe-2S]-[ferredoxin] + H2O = (2E)-4-hydroxy-3-methylbut-2-enyl diphosphate + 2 reduced [2Fe-2S]-[ferredoxin] + 2 H(+). It functions in the pathway isoprenoid biosynthesis; dimethylallyl diphosphate biosynthesis; dimethylallyl diphosphate from (2E)-4-hydroxy-3-methylbutenyl diphosphate: step 1/1. The protein operates within isoprenoid biosynthesis; isopentenyl diphosphate biosynthesis via DXP pathway; isopentenyl diphosphate from 1-deoxy-D-xylulose 5-phosphate: step 6/6. Its function is as follows. Catalyzes the conversion of 1-hydroxy-2-methyl-2-(E)-butenyl 4-diphosphate (HMBPP) into a mixture of isopentenyl diphosphate (IPP) and dimethylallyl diphosphate (DMAPP). Acts in the terminal step of the DOXP/MEP pathway for isoprenoid precursor biosynthesis. This is 4-hydroxy-3-methylbut-2-enyl diphosphate reductase from Bacillus cereus (strain B4264).